The following is a 1063-amino-acid chain: Structural polyprotein (1063 aa).

Residues 23–131 (LRAELAAGAS…LGPPTNPFQA (109 aa)) are disordered. Positions 30–69 (GASQLRRPRPPRQRDSSTSGDDSGRDSGGPRRRRGNRGRG) are human C1QBP/SF2P32-binding. Serine 46 bears the Phosphoserine; by host mark. Positions 59–69 (PRRRRGNRGRG) are enriched in basic residues. The span at 70–87 (QRKDWSKAPPPPEERQES) shows a compositional bias: basic and acidic residues. A compositionally biased stretch (pro residues) spans 93 to 107 (VPKPPRAPPQPPQPP). Cysteine 153 and cysteine 197 are joined by a disulfide. A functions as E2 signal peptide region spans residues 279–300 (GAPQVFLAGLLLAAVAVGTARA). The Extracellular segment spans residues 301 to 534 (GLQPRTDIAA…LWLATANALS (234 aa)). The disordered stretch occupies residues 305–327 (RTDIAAPPAPPQAPRAHGKHYGH). N-linked (GlcNAc...) asparagine; by host glycosylation is found at asparagine 353, asparagine 371, asparagine 410, and asparagine 429. Residues 535-555 (LDHALAAVVLLVPWVLIFMLC) traverse the membrane as a helical segment. Over 556–582 (RRACRRRGAAAALTAVVLQGYNPPAYG) the chain is Cytoplasmic. Residues 562-582 (RGAAAALTAVVLQGYNPPAYG) form a functions as E1 signal peptide region. Residues 583–1028 (EEAFTYLCTA…QTWAEWAAAH (446 aa)) lie on the Extracellular side of the membrane. 8 disulfides stabilise this stretch: cysteine 590/cysteine 595, cysteine 619/cysteine 824, cysteine 641/cysteine 653, cysteine 699/cysteine 712, cysteine 758/cysteine 767, cysteine 807/cysteine 817, cysteine 931/cysteine 934, and cysteine 950/cysteine 983. An N-linked (GlcNAc...) asparagine; by host glycan is attached at asparagine 658. Residues asparagine 670 and alanine 671 each coordinate Ca(2+). 2 residues coordinate Ca(2+): aspartate 718 and threonine 719. N-linked (GlcNAc...) asparagine; by host glycans are attached at residues asparagine 759 and asparagine 791. O-linked (GalNAc...) threonine; by host glycosylation is found at threonine 1011 and threonine 1012. The chain crosses the membrane as a helical span at residues 1029–1049 (WWQLTLGAICALLLAGLLACC). At 1050–1063 (AKCLYHLRGAIAPR) the chain is on the extracellular side.

As to quaternary structure, homodimer; further assembles into homooligomer. Interacts with human C1QBP. Interacts (via N-terminus) with protease/methyltransferase p150. Heterodimer with spike glycoprotein E2. In terms of assembly, heterodimer with spike glycoprotein E1. Post-translationally, structural polyprotein: Specific enzymatic cleavages in vivo yield mature proteins. Two signal peptidase-mediated cleavages within the polyprotein produce the structural proteins capsid, E2, and E1. The E2 signal peptide remains attached to the C-terminus of the capsid protein after cleavage by the signal peptidase. Another signal peptide at E2 C-terminus directs E1 to the ER, with a similar mechanism. Contains three N-linked oligosaccharides. In terms of processing, capsid is phosphorylated on Ser-46 by host. This phosphorylation negatively regulates capsid protein RNA-binding activity. Dephosphorylated by human PP1A.

The protein localises to the virion. The protein resides in the host cytoplasm. It localises to the host mitochondrion. It is found in the virion membrane. Its subcellular location is the host Golgi apparatus membrane. In terms of biological role, capsid protein interacts with genomic RNA and assembles into icosahedric core particles 65-70 nm in diameter. The resulting nucleocapsid eventually associates with the cytoplasmic domain of E2 at the cell membrane, leading to budding and formation of mature virions from host Golgi membranes. Phosphorylation negatively regulates RNA-binding activity, possibly delaying virion assembly during the viral replication phase. Capsid protein dimerizes and becomes disulfide-linked in the virion. Modulates genomic RNA replication. Modulates subgenomic RNA synthesis by interacting with human C1QBP/SF2P32. Induces both perinuclear clustering of mitochondria and the formation of electron-dense intermitochondrial plaques, both hallmarks of rubella virus infected cells. Induces apoptosis when expressed in transfected cells. Its function is as follows. Responsible for viral attachment to target host cell, by binding to the cell receptor. Its transport to the plasma membrane depends on interaction with E1 protein. The surface glycoproteins display an irregular helical organization and a pseudo-tetrameric inner nucleocapsid arrangement. Class II viral fusion protein. Fusion activity is inactive as long as E1 is bound to E2 in mature virion. After virus attachment to target cell and clathrin-mediated endocytosis, acidification of the endosome would induce dissociation of E1/E2 heterodimer and concomitant trimerization of the E1 subunits. This E1 homotrimer is fusion active, and promotes release of viral nucleocapsid in cytoplasm after endosome and viral membrane fusion. The cytoplasmic tail of spike glycoprotein E1 modulates virus release. The surface glycoproteins display an irregular helical organization and a pseudo-tetrameric inner nucleocapsid arrangement. The sequence is that of Structural polyprotein from Homo sapiens (Human).